Consider the following 158-residue polypeptide: MFRIGQGFDVHEFAEGRPLIIGGITIPHEKGLIGHSDADVLLHTIADACLGAIAAGDIGKHFPDTDPAFKDADSAVLLQKVWGFVREQGYELGNLDCTIIAQKPKMAPHIESMRKRISELLETSIDNINVKATTTEKLGFTGREEGIASQAVVLLQKK.

The a divalent metal cation site is built by Asp-9 and His-11. 4-CDP-2-C-methyl-D-erythritol 2-phosphate is bound by residues 9-11 and 35-36; these read DVH and HS. A divalent metal cation is bound at residue His-43. Residues 57–59, 62–66, 101–107, 133–136, Phe-140, and Arg-143 each bind 4-CDP-2-C-methyl-D-erythritol 2-phosphate; these read DIG, FPDTD, AQKPKMA, and TTTE.

This sequence belongs to the IspF family. As to quaternary structure, homotrimer. A divalent metal cation is required as a cofactor.

The enzyme catalyses 4-CDP-2-C-methyl-D-erythritol 2-phosphate = 2-C-methyl-D-erythritol 2,4-cyclic diphosphate + CMP. It participates in isoprenoid biosynthesis; isopentenyl diphosphate biosynthesis via DXP pathway; isopentenyl diphosphate from 1-deoxy-D-xylulose 5-phosphate: step 4/6. Functionally, involved in the biosynthesis of isopentenyl diphosphate (IPP) and dimethylallyl diphosphate (DMAPP), two major building blocks of isoprenoid compounds. Catalyzes the conversion of 4-diphosphocytidyl-2-C-methyl-D-erythritol 2-phosphate (CDP-ME2P) to 2-C-methyl-D-erythritol 2,4-cyclodiphosphate (ME-CPP) with a corresponding release of cytidine 5-monophosphate (CMP). The protein is 2-C-methyl-D-erythritol 2,4-cyclodiphosphate synthase of Bacillus cereus (strain B4264).